We begin with the raw amino-acid sequence, 257 residues long: Ribosomal RNA small subunit methyltransferase J (257 aa).

S-adenosyl-L-methionine contacts are provided by residues 107–108 (RD), 123–124 (ER), and Asp-177.

It belongs to the methyltransferase superfamily. RsmJ family.

It localises to the cytoplasm. The enzyme catalyses guanosine(1516) in 16S rRNA + S-adenosyl-L-methionine = N(2)-methylguanosine(1516) in 16S rRNA + S-adenosyl-L-homocysteine + H(+). Its function is as follows. Specifically methylates the guanosine in position 1516 of 16S rRNA. In Haemophilus influenzae (strain PittEE), this protein is Ribosomal RNA small subunit methyltransferase J.